The following is a 637-amino-acid chain: Neutral ceramidase (637 aa).

H34 contributes to the Mg(2+) binding site. Zn(2+) is bound by residues H96 and H204. S256 acts as the Nucleophile in catalysis. Residues E417 and Y453 each contribute to the Zn(2+) site. Mg(2+)-binding residues include D575, D577, and T580.

Belongs to the neutral ceramidase family. Zn(2+) is required as a cofactor. It depends on Mg(2+) as a cofactor.

It catalyses the reaction an N-acylsphing-4-enine + H2O = sphing-4-enine + a fatty acid. The enzyme catalyses an N-acylsphinganine + H2O = sphinganine + a fatty acid. The catalysed reaction is an N-acyl-(4R)-4-hydroxysphinganine + H2O = (4R)-hydroxysphinganine + a fatty acid. It carries out the reaction N-(9Z-octadecenoyl)-sphing-4-enine + H2O = sphing-4-enine + (9Z)-octadecenoate. It catalyses the reaction N-(hexanoyl)sphing-4-enine + H2O = hexanoate + sphing-4-enine. The enzyme catalyses N-hexadecanoylsphing-4-enine + H2O = sphing-4-enine + hexadecanoate. The catalysed reaction is N-octadecanoylsphing-4-enine + H2O = sphing-4-enine + octadecanoate. It carries out the reaction N-eicosanoyl-sphing-4-enine + H2O = eicosanoate + sphing-4-enine. It catalyses the reaction N-(15Z-tetracosenoyl)-sphing-4-enine + H2O = (15Z)-tetracosenoate + sphing-4-enine. The enzyme catalyses N-tetracosanoyl-sphing-4-enine + H2O = tetracosanoate + sphing-4-enine. With respect to regulation, 90% of activity is inhibited by nickel, zinc and calcium ions. Magnesium, cobalt, copper and manganese ions inhibit between 50 and 80% of activity. Functionally, catalyzes the cleavage of the N-acyl linkage of the ceramides (Cers) to yield sphingosine (Sph) and free fatty acid. Also catalyzes the synthesis of Cers from Sph and fatty acid. Cers containning C6-C24 fatty acids are well hydrolyzed, and Cers with mono unsaturated fatty acids are much more hydrolyzed than those with saturated fatty acids. This chain is Neutral ceramidase, found in Mycobacterium tuberculosis (strain ATCC 25618 / H37Rv).